We begin with the raw amino-acid sequence, 164 residues long: FMN reductase (NADH) RutF (164 aa).

Belongs to the non-flavoprotein flavin reductase family. RutF subfamily.

The enzyme catalyses FMNH2 + NAD(+) = FMN + NADH + 2 H(+). Functionally, catalyzes the reduction of FMN to FMNH2 which is used to reduce pyrimidine by RutA via the Rut pathway. This Escherichia coli O45:K1 (strain S88 / ExPEC) protein is FMN reductase (NADH) RutF.